The primary structure comprises 240 residues: Allene oxide cyclase, chloroplastic (240 aa).

Residues 1–49 (MAAAAPSRVSVRAAAPGQTGGFAKIRPQVVVAAAARSAGVSGRRARSVR) constitute a chloroplast transit peptide.

This sequence belongs to the allene oxide cyclase family.

The protein localises to the plastid. The protein resides in the chloroplast. It catalyses the reaction (9Z,13S,15Z)-12,13-epoxyoctadeca-9,11,15-trienoate = (9S,13S,15Z)-12-oxophyto-10,15-dienoate. Its pathway is lipid metabolism; polyunsaturated fatty acid biosynthesis. In terms of biological role, involved in the production of 12-oxo-phytodienoic acid (OPDA), a precursor of jasmonic acid (JA). Required for the production of JA in response to wounding. Necessary for flower and coleoptile development regulation by light, including blue (BL), red (RL) and far red (FR) lights. Involved in the auxin-mediated signaling pathway leading to growth stimulation. Essential for photodestruction of phyA upon activation by RL and FR. Implicated in responses to salt stress (NaCl). Confers resistance to incompatible strains of the blast fungus Magnaporthe grisea, jasmonic acid (JA) thus playing a significant role in the resistance to fungal infection. Implicated in riboflavin-induced resistance to the sheath blight Rhizoctonia solani. Required for Pseudomonas fluorescens-mediated JA-dependent induced systemic resistance (ISR). Confers some resistance, independently of the JA pathway but probably via OPDA accumulation, to brown planthopper (BPH, Nilaparvata lugens), a destructive, monophagous, piercing-sucking insect, mainly by reducing its feeding activity and survival rate. Triggers resistance to the chewing insect striped stem borer (SSB) Chilo suppressalis, to the root hemiparasite witchweed Striga hermonthica, and to the root feeder insect rice water weevil Lissorhoptrus oryzophilus, in a JA-dependent manner, by attenuating both the growth mass and growth rate of caterpillars. In Oryza sativa subsp. indica (Rice), this protein is Allene oxide cyclase, chloroplastic.